Consider the following 688-residue polypeptide: Polyribonucleotide nucleotidyltransferase (688 aa).

Residues aspartate 484 and aspartate 490 each contribute to the Mg(2+) site. The 60-residue stretch at 550-609 (PTTEIFNVAPDKIVEIIGQGGRVIKEIVEKFEVKIDLNKPSGEVKIMGNKERVLKTKEFI) folds into the KH domain. The region spanning 626–688 (DEVLEAQVKR…NKGKIALDLA (63 aa)) is the S1 motif domain.

It belongs to the polyribonucleotide nucleotidyltransferase family. It depends on Mg(2+) as a cofactor.

The protein resides in the cytoplasm. It carries out the reaction RNA(n+1) + phosphate = RNA(n) + a ribonucleoside 5'-diphosphate. In terms of biological role, involved in mRNA degradation. Catalyzes the phosphorolysis of single-stranded polyribonucleotides processively in the 3'- to 5'-direction. This chain is Polyribonucleotide nucleotidyltransferase, found in Helicobacter pylori (strain G27).